We begin with the raw amino-acid sequence, 337 residues long: MANSC domain-containing protein 4 (337 aa).

An N-terminal signal peptide occupies residues 1-18 (MRAVELLLLLGLASMVHG). The Extracellular portion of the chain corresponds to 19–278 (LCSPTVFYRD…SSENEEPWDG (260 aa)). One can recognise an MANSC domain in the interval 33–113 (RFPGMLLDLE…LEPGASAILY (81 aa)). N114, N227, and N251 each carry an N-linked (GlcNAc...) asparagine glycan. 2 stretches are compositionally biased toward polar residues: residues 216–230 (SPSTDFTHSPGNKTI) and 239–260 (TRVSQVPSRSRLNISKPSVNKT). Residues 216–277 (SPSTDFTHSP…HSSENEEPWD (62 aa)) are disordered. The helical transmembrane segment at 279–299 (APASAGVWLACVTLGAAVISL) threads the bilayer. Over 300 to 337 (CCRVVLGTSRCCGKRQGWSHMGQRSASGCRRNTLKENS) the chain is Cytoplasmic. The disordered stretch occupies residues 314-337 (RQGWSHMGQRSASGCRRNTLKENS).

The protein resides in the membrane. The polypeptide is MANSC domain-containing protein 4 (Mansc4) (Mus musculus (Mouse)).